Reading from the N-terminus, the 767-residue chain is Cilia- and flagella-associated protein 91 (767 aa).

The disordered stretch occupies residues 1 to 29 (MSHAVTIEEPQAQPQVSQTRYRERSRAGS).

Belongs to the CFAP91 family. Interacts with MYCBP and AKAP1. Part of a complex containing MYCBP, AKAP1 and PRKAR2B. Interacts with CFAP61. As to quaternary structure, does not interact with MYCBP. In terms of processing, phosphorylated by PKA. Strongly expressed in the liver. In terms of tissue distribution, widely expressed, but strongly expressed in all spermatogenesis-related tissues, including the testis, the epithelium of cauda and the corpus epididymis, as well as the spermatid and mature sperm. Also expressed in Leydig cells.

The protein localises to the mitochondrion. Its subcellular location is the cytoplasm. It is found in the cytoskeleton. It localises to the cilium axoneme. Functionally, involved in sperm flagellum axonemal organization and function. May regulate cilium motility through its role in the assembly of the axonemal radial spokes. The chain is Cilia- and flagella-associated protein 91 from Homo sapiens (Human).